The chain runs to 159 residues: SsrA-binding protein (159 aa).

Positions Lys138–Val159 are disordered.

Belongs to the SmpB family.

It localises to the cytoplasm. Its function is as follows. Required for rescue of stalled ribosomes mediated by trans-translation. Binds to transfer-messenger RNA (tmRNA), required for stable association of tmRNA with ribosomes. tmRNA and SmpB together mimic tRNA shape, replacing the anticodon stem-loop with SmpB. tmRNA is encoded by the ssrA gene; the 2 termini fold to resemble tRNA(Ala) and it encodes a 'tag peptide', a short internal open reading frame. During trans-translation Ala-aminoacylated tmRNA acts like a tRNA, entering the A-site of stalled ribosomes, displacing the stalled mRNA. The ribosome then switches to translate the ORF on the tmRNA; the nascent peptide is terminated with the 'tag peptide' encoded by the tmRNA and targeted for degradation. The ribosome is freed to recommence translation, which seems to be the essential function of trans-translation. This is SsrA-binding protein from Alteromonas mediterranea (strain DSM 17117 / CIP 110805 / LMG 28347 / Deep ecotype).